A 799-amino-acid polypeptide reads, in one-letter code: Elongation factor G, mitochondrial (799 aa).

A mitochondrion-targeting transit peptide spans Met-1 to Cys-34. A tr-type G domain is found at Ser-97–Ala-384. Residues Ala-106–Thr-113, Asp-182–His-186, and Asn-236–Asp-239 each bind GTP.

This sequence belongs to the TRAFAC class translation factor GTPase superfamily. Classic translation factor GTPase family. EF-G/EF-2 subfamily.

The protein localises to the mitochondrion. Its pathway is protein biosynthesis; polypeptide chain elongation. Mitochondrial GTPase that catalyzes the GTP-dependent ribosomal translocation step during translation elongation. During this step, the ribosome changes from the pre-translocational (PRE) to the post-translocational (POST) state as the newly formed A-site-bound peptidyl-tRNA and P-site-bound deacylated tRNA move to the P and E sites, respectively. Catalyzes the coordinated movement of the two tRNA molecules, the mRNA and conformational changes in the ribosome. The sequence is that of Elongation factor G, mitochondrial (mef1) from Aspergillus flavus (strain ATCC 200026 / FGSC A1120 / IAM 13836 / NRRL 3357 / JCM 12722 / SRRC 167).